The following is a 339-amino-acid chain: DNA-directed RNA polymerase subunit alpha (339 aa).

The alpha N-terminal domain (alpha-NTD) stretch occupies residues Met-1–Glu-235. The segment at Phe-251–Phe-339 is alpha C-terminal domain (alpha-CTD).

Belongs to the RNA polymerase alpha chain family. In terms of assembly, homodimer. The RNAP catalytic core consists of 2 alpha, 1 beta, 1 beta' and 1 omega subunit. When a sigma factor is associated with the core the holoenzyme is formed, which can initiate transcription.

The catalysed reaction is RNA(n) + a ribonucleoside 5'-triphosphate = RNA(n+1) + diphosphate. In terms of biological role, DNA-dependent RNA polymerase catalyzes the transcription of DNA into RNA using the four ribonucleoside triphosphates as substrates. This Granulibacter bethesdensis (strain ATCC BAA-1260 / CGDNIH1) protein is DNA-directed RNA polymerase subunit alpha.